A 277-amino-acid polypeptide reads, in one-letter code: Anamorsin homolog (277 aa).

Positions 1 to 134 (MALQGNVAIL…PFYPEFSDAV (134 aa)) are N-terminal SAM-like domain. Residues 135–191 (SFTSKKQSFESAAIPLAVKSTTTQPIKKWTVLADDFGDDQDDDIIDEDTLLDDTDEV) are linker. 4 residues coordinate [2Fe-2S] cluster: cysteine 199, cysteine 210, cysteine 213, and cysteine 215. The fe-S binding site A stretch occupies residues 199–215 (CGDAVGGKKRACKNCTC). [4Fe-4S] cluster-binding residues include cysteine 238, cysteine 241, cysteine 249, and cysteine 252. 2 short sequence motifs (cx2C motif) span residues 238–241 (CGNC) and 249–252 (CGSC). The interval 238-252 (CGNCFKGDAFRCGSC) is fe-S binding site B.

It belongs to the anamorsin family. Monomer. [2Fe-2S] cluster is required as a cofactor. Requires [4Fe-4S] cluster as cofactor.

Its subcellular location is the cytoplasm. The protein resides in the mitochondrion intermembrane space. Its function is as follows. Component of the cytosolic iron-sulfur (Fe-S) protein assembly (CIA) machinery. Required for the maturation of extramitochondrial Fe-S proteins. Part of an electron transfer chain functioning in an early step of cytosolic Fe-S biogenesis, facilitating the de novo assembly of a [4Fe-4S] cluster on the cytosolic Fe-S scaffold complex. Electrons are transferred from NADPH via a FAD- and FMN-containing diflavin oxidoreductase. Together with the diflavin oxidoreductase, also required for the assembly of the diferric tyrosyl radical cofactor of ribonucleotide reductase (RNR), probably by providing electrons for reduction during radical cofactor maturation in the catalytic small subunit. The chain is Anamorsin homolog from Phytophthora infestans (strain T30-4) (Potato late blight agent).